The following is a 102-amino-acid chain: Carboxysome shell protein CcmK2 (102 aa).

Residues 4 to 90 enclose the BMC domain; that stretch reads AVGMIETRGF…PHENLEYVLP (87 aa).

This sequence belongs to the bacterial microcompartments protein family. CcmK subfamily. In terms of assembly, homohexamer. Stacked hexamers, with the concave faces together, have also been crystallized. Interacts preferentially with itself, then with CcmK1 and CcmK4a in vitro. May interact with CcmL, this occurs at very high CcmK2 concentrations. Interacts with CcmN and CcmO in the carboxysome.

It localises to the carboxysome. Probably the major shell protein of the carboxysome, a polyhedral inclusion where RuBisCO (ribulose bisphosphate carboxylase, rbcL-rbcS) is sequestered. Assembles into hexamers which make sheets that form the facets of the polyhedral carboxysome. The hexamer central pore probably regulates metabolite flux. The sequence is that of Carboxysome shell protein CcmK2 from Thermosynechococcus vestitus (strain NIES-2133 / IAM M-273 / BP-1).